The primary structure comprises 334 residues: tRNA U34 carboxymethyltransferase (334 aa).

Residues lysine 91, tryptophan 105, lysine 110, glycine 130, 152–154 (DPT), 181–182 (IE), methionine 196, tyrosine 200, and arginine 315 contribute to the carboxy-S-adenosyl-L-methionine site.

Belongs to the class I-like SAM-binding methyltransferase superfamily. CmoB family. In terms of assembly, homotetramer.

The catalysed reaction is carboxy-S-adenosyl-L-methionine + 5-hydroxyuridine(34) in tRNA = 5-carboxymethoxyuridine(34) in tRNA + S-adenosyl-L-homocysteine + H(+). Functionally, catalyzes carboxymethyl transfer from carboxy-S-adenosyl-L-methionine (Cx-SAM) to 5-hydroxyuridine (ho5U) to form 5-carboxymethoxyuridine (cmo5U) at position 34 in tRNAs. The protein is tRNA U34 carboxymethyltransferase of Klebsiella pneumoniae (strain 342).